The primary structure comprises 105 residues: Iron-sulfur cluster assembly protein CyaY (105 aa).

It belongs to the frataxin family.

Involved in iron-sulfur (Fe-S) cluster assembly. May act as a regulator of Fe-S biogenesis. This Chromobacterium violaceum (strain ATCC 12472 / DSM 30191 / JCM 1249 / CCUG 213 / NBRC 12614 / NCIMB 9131 / NCTC 9757 / MK) protein is Iron-sulfur cluster assembly protein CyaY.